A 116-amino-acid chain; its full sequence is Ribonuclease P protein component (116 aa).

This sequence belongs to the RnpA family. Consists of a catalytic RNA component (M1 or rnpB) and a protein subunit.

The enzyme catalyses Endonucleolytic cleavage of RNA, removing 5'-extranucleotides from tRNA precursor.. Its function is as follows. RNaseP catalyzes the removal of the 5'-leader sequence from pre-tRNA to produce the mature 5'-terminus. It can also cleave other RNA substrates such as 4.5S RNA. The protein component plays an auxiliary but essential role in vivo by binding to the 5'-leader sequence and broadening the substrate specificity of the ribozyme. This Citrifermentans bemidjiense (strain ATCC BAA-1014 / DSM 16622 / JCM 12645 / Bem) (Geobacter bemidjiensis) protein is Ribonuclease P protein component.